The chain runs to 581 residues: Aspartate--tRNA ligase (581 aa).

Glu170 lines the L-aspartate pocket. The interval 194-197 (QLFK) is aspartate. Arg216 is a binding site for L-aspartate. Residues 216-218 (RDE) and Gln225 each bind ATP. His439 contacts L-aspartate. Glu468 provides a ligand contact to ATP. An L-aspartate-binding site is contributed by Arg475. 520 to 523 (GFDR) contributes to the ATP binding site.

This sequence belongs to the class-II aminoacyl-tRNA synthetase family. Type 1 subfamily. In terms of assembly, homodimer.

The protein resides in the cytoplasm. It catalyses the reaction tRNA(Asp) + L-aspartate + ATP = L-aspartyl-tRNA(Asp) + AMP + diphosphate. Functionally, catalyzes the attachment of L-aspartate to tRNA(Asp) in a two-step reaction: L-aspartate is first activated by ATP to form Asp-AMP and then transferred to the acceptor end of tRNA(Asp). The chain is Aspartate--tRNA ligase from Thermosipho melanesiensis (strain DSM 12029 / CIP 104789 / BI429).